Reading from the N-terminus, the 357-residue chain is sn-glycerol-3-phosphate import ATP-binding protein UgpC (357 aa).

One can recognise an ABC transporter domain in the interval 4-235 (LKLQAVTKSY…PASLFVASFI (232 aa)). 37–44 (GPSGCGKS) provides a ligand contact to ATP.

The protein belongs to the ABC transporter superfamily. sn-glycerol-3-phosphate importer (TC 3.A.1.1.3) family. As to quaternary structure, the complex is composed of two ATP-binding proteins (UgpC), two transmembrane proteins (UgpA and UgpE) and a solute-binding protein (UgpB).

It localises to the cell inner membrane. It catalyses the reaction sn-glycerol 3-phosphate(out) + ATP + H2O = sn-glycerol 3-phosphate(in) + ADP + phosphate + H(+). Functionally, part of the ABC transporter complex UgpBAEC involved in sn-glycerol-3-phosphate (G3P) import. Responsible for energy coupling to the transport system. The sequence is that of sn-glycerol-3-phosphate import ATP-binding protein UgpC from Yersinia pseudotuberculosis serotype I (strain IP32953).